Reading from the N-terminus, the 1479-residue chain is C-type mannose receptor 2 (1479 aa).

Positions 1–30 (MVPIRPALAPWPRHLLRCVLLLGGLRLGHP) are cleaved as a signal peptide. Topologically, residues 31–1413 (ADSAAALLEP…SAALPESPVA (1383 aa)) are extracellular. The Ricin B-type lectin domain occupies 37–190 (LLEPDVFLIF…SHGKPCTIPF (154 aa)). Cysteines 92 and 111 form a disulfide. 2 N-linked (GlcNAc...) asparagine glycosylation sites follow: Asn-101 and Asn-139. Positions 181–229 (SHGKPCTIPFKYDNQWFHGCTSTGREDGHLWCATTQDYGKDERWGFCPI) constitute a Fibronectin type-II domain. 4 cysteine pairs are disulfide-bonded: Cys-186/Cys-212, Cys-200/Cys-227, Cys-265/Cys-358, and Cys-334/Cys-350. The C-type lectin 1 domain maps to 243–359 (LTDSCYQFNF…CSIALPYVCK (117 aa)). Asn-363 carries an N-linked (GlcNAc...) asparagine glycan. 7 consecutive C-type lectin domains span residues 388 to 504 (FQGH…SICK), 527 to 643 (HSPS…RYIC), 677 to 808 (KLRH…WICK), 831 to 950 (FQEA…YICK), 978 to 1106 (FLNK…GFIC), 1131 to 1242 (YLNH…GAVC), and 1271 to 1391 (FREH…GVVC). 7 cysteine pairs are disulfide-bonded: Cys-409/Cys-503, Cys-480/Cys-495, Cys-617/Cys-634, Cys-703/Cys-807, Cys-784/Cys-799, Cys-852/Cys-949, and Cys-926/Cys-941. Asn-1028 carries an N-linked (GlcNAc...) asparagine glycan. A disulfide bond links Cys-1077 and Cys-1097. Lys-1141 participates in a covalent cross-link: Glycyl lysine isopeptide (Lys-Gly) (interchain with G-Cter in SUMO1). Cys-1219 and Cys-1233 are oxidised to a cystine. N-linked (GlcNAc...) asparagine glycosylation occurs at Asn-1348. Cys-1367 and Cys-1382 are oxidised to a cystine. A helical membrane pass occupies residues 1414–1434 (LVVVLTAVLLLLALMTAALIL). Residues 1435 to 1479 (YRRRQSAERGSFEGARYSRSSHSGPAEATEKNILVSDMEMNEQQE) lie on the Cytoplasmic side of the membrane. Residues 1446–1479 (FEGARYSRSSHSGPAEATEKNILVSDMEMNEQQE) are disordered.

As to quaternary structure, interacts directly with PLAUR/UPAR and PLAU/pro-UPA to form a tri-molecular complex. Interacts with collagen V and with C-terminal region of type I collagen/COL1A1. Phosphorylated. As to expression, highly expressed in heart, lung and kidney, but little or no expression in brain, thymus or adult liver. Expressed at highly endothelialized sites such as those in choroid plexus and kidney glomerulai as well as in chondrocytes in cartilaginous regions of the embryo.

The protein resides in the membrane. Functionally, may play a role as endocytotic lectin receptor displaying calcium-dependent lectin activity. Internalizes glycosylated ligands from the extracellular space for release in an endosomal compartment via clathrin-mediated endocytosis. May be involved in plasminogen activation system controlling the extracellular level of PLAUR/PLAU, and thus may regulate protease activity at the cell surface. May contribute to cellular uptake, remodeling and degradation of extracellular collagen matrices. May participate in remodeling of extracellular matrix cooperating with the matrix metalloproteinases (MMPs). The protein is C-type mannose receptor 2 (Mrc2) of Mus musculus (Mouse).